The chain runs to 425 residues: Proteinase-activated receptor 1 (425 aa).

A signal peptide spans 1–21 (MGPRRLLLVAACFSLCGPLLS). Residues 22–41 (ARTRARRPESKATNATLDPR) constitute a propeptide that is removed on maturation. Residues asparagine 35, asparagine 62, and asparagine 75 are each glycosylated (N-linked (GlcNAc...) asparagine). Over 42–102 (SFLLRNPNDK…SGYLTSSWLT (61 aa)) the chain is Extracellular. Residues 103–128 (LFVPSVYTGVFVVSLPLNIMAIVVFI) form a helical membrane-spanning segment. The Cytoplasmic segment spans residues 129–137 (LKMKVKKPA). A helical membrane pass occupies residues 138–157 (VVYMLHLATADVLFVSVLPF). Residues 158-176 (KISYYFSGSDWQFGSELCR) are Extracellular-facing. The cysteines at positions 175 and 254 are disulfide-linked. The chain crosses the membrane as a helical span at residues 177 to 198 (FVTAAFYCNMYASILLMTVISI). Residues 199–218 (DRFLAVVYPMQSLSWRTLGR) are Cytoplasmic-facing. Residues 219–239 (ASFTCLAIWALAIAGVVPLLL) traverse the membrane as a helical segment. Over 240-268 (KEQTIQVPGLNITTCHDVLNETLLEGYYA) the chain is Extracellular. N-linked (GlcNAc...) asparagine glycans are attached at residues asparagine 250 and asparagine 259. Residues 269–288 (YYFSAFSAVFFFVPLIISTV) traverse the membrane as a helical segment. At 289 to 311 (CYVSIIRCLSSSAVANRSKKSRA) the chain is on the cytoplasmic side. Residues 312 to 334 (LFLSAAVFCIFIICFGPTNVLLI) form a helical membrane-spanning segment. At 335–350 (AHYSFLSHTSTTEAAY) the chain is on the extracellular side. A helical membrane pass occupies residues 351-374 (FAYLLCVCVSSISCCIDPLIYYYA). Over 375-425 (SSECQRYVYSILCCKESSDPSSYNSSGQLMASKMDTCSSNLNNSIYKKLLT) the chain is Cytoplasmic. The residue at position 418 (serine 418) is a Phosphoserine.

This sequence belongs to the G-protein coupled receptor 1 family. In terms of processing, proteolytic cleavage by thrombin generates a new N-terminus that functions as a tethered ligand. Also proteolytically cleaved by cathepsin CTSG. Cleavage at 41-Arg-|-Ser-42 by CTSG results in receptor activation while cleavage at 55-Phe-|-Trp-56 results in inhibition of receptor activation. Phosphorylated in the C-terminal tail; probably mediating desensitization prior to the uncoupling and internalization of the receptor. As to expression, platelets and vascular endothelial cells.

The protein localises to the cell membrane. In terms of biological role, high affinity receptor that binds the activated thrombin, leading to calcium release from intracellular stores. The thrombin-activated receptor signaling pathway is mediated through PTX-insensitive G proteins, activation of phospholipase C resulting in the production of 1D-myo-inositol 1,4,5-trisphosphate (InsP3) which binds to InsP3 receptors causing calcium release from the stores. In astrocytes, the calcium released into the cytosol allows the Ca(2+)-dependent release of L-glutamate into the synaptic cleft through BEST1, that targets the neuronal postsynaptic GRIN2A/NMDAR receptor resulting in the synaptic plasticity regulation. May play a role in platelets activation and in vascular development. Mediates up-regulation of pro-inflammatory cytokines, such as MCP-1/CCL2 and IL6, triggered by coagulation factor Xa (F10) in cardiac fibroblasts and umbilical vein endothelial cells. The sequence is that of Proteinase-activated receptor 1 from Homo sapiens (Human).